Consider the following 77-residue polypeptide: Small ribosomal subunit protein bS21 (77 aa).

Positions 55-77 (RKLARKRAQREGLMSNGRISALR) are disordered.

The protein belongs to the bacterial ribosomal protein bS21 family.

The chain is Small ribosomal subunit protein bS21 from Bartonella quintana (strain Toulouse) (Rochalimaea quintana).